A 1084-amino-acid chain; its full sequence is Autophagy-related protein 11 (1084 aa).

Coiled-coil stretches lie at residues Val-585–Ser-739 and Val-847–Lys-879. 2 disordered regions span residues Ser-925–Arg-961 and Asn-973–Ala-1007. Low complexity-rich tracts occupy residues Ser-940–Ser-949 and Asn-973–Asn-993. Over residues Lys-994–Ala-1007 the composition is skewed to polar residues.

It belongs to the ATG11 family. In terms of assembly, homodimer and potential homooligomers. Interacts with ATG1 kinase and the ATG19 and ATG34 cargo protein transporters. Interacts with ATG9, ATG17 and ATG20.

Its subcellular location is the preautophagosomal structure membrane. The protein localises to the vacuole membrane. Its function is as follows. Involved in cytoplasm to vacuole transport (Cvt), pexophagy, mitophagy and nucleophagy. Recruits mitochondria for their selective degradation via autophagy (mitophagy) during starvation, through its interaction with ATG32. Works as scaffold proteins that recruit ATG proteins to the pre-autophagosome (PAS), the site of vesicle/autophagosome formation. Required for ATG9 anterograde transport from the mitochondria to the PAS. Also recruits the ATG19-prAPE1 complex to the PAS. Required for the Cvt vesicles completion. The sequence is that of Autophagy-related protein 11 from Kluyveromyces marxianus (strain DMKU3-1042 / BCC 29191 / NBRC 104275) (Yeast).